Reading from the N-terminus, the 138-residue chain is Phospholipase A2 group V (138 aa).

The first 20 residues, 1 to 20, serve as a signal peptide directing secretion; the sequence is MKGLLPLAWFLACSVPAVQG. Cystine bridges form between Cys46–Cys137, Cys48–Cys64, Cys63–Cys117, Cys70–Cys110, Cys79–Cys103, and Cys97–Cys108. Ca(2+) is bound by residues Tyr47, Gly49, and Gly51. His67 is an active-site residue. Asp68 is a Ca(2+) binding site. The active site involves Asp111.

The protein belongs to the phospholipase A2 family. Ca(2+) serves as cofactor. This enzyme lacks one of the seven disulfide bonds found in similar PLA2 proteins. In terms of tissue distribution, heart, placenta and less abundantly, in lung. Detected in the outer and inner plexiform layers of the retina (at protein level). Expressed in monocytes and macrophages.

It localises to the secreted. The protein resides in the cell membrane. The protein localises to the cytoplasmic vesicle. Its subcellular location is the phagosome. It is found in the recycling endosome. It localises to the golgi apparatus. The protein resides in the cis-Golgi network. The protein localises to the trans-Golgi network. It carries out the reaction a 1,2-diacyl-sn-glycero-3-phosphocholine + H2O = a 1-acyl-sn-glycero-3-phosphocholine + a fatty acid + H(+). The catalysed reaction is 1-hexadecanoyl-2-(9Z-octadecenoyl)-sn-glycero-3-phosphocholine + H2O = 1-hexadecanoyl-sn-glycero-3-phosphocholine + (9Z)-octadecenoate + H(+). The enzyme catalyses 1-hexadecanoyl-2-(5Z,8Z,11Z,14Z-eicosatetraenoyl)-sn-glycero-3-phosphocholine + H2O = 1-hexadecanoyl-sn-glycero-3-phosphocholine + (5Z,8Z,11Z,14Z)-eicosatetraenoate + H(+). It catalyses the reaction 1-hexadecanoyl-2-(9Z,12Z-octadecadienoyl)-sn-glycero-3-phosphoethanolamine + H2O = 1-hexadecanoyl-sn-glycero-3-phosphoethanolamine + (9Z,12Z)-octadecadienoate + H(+). It carries out the reaction 1-hexadecanoyl-2-(5Z,8Z,11Z,14Z-eicosatetraenoyl)-sn-glycero-3-phosphoethanolamine + H2O = 1-hexadecanoyl-sn-glycero-3-phosphoethanolamine + (5Z,8Z,11Z,14Z)-eicosatetraenoate + H(+). The catalysed reaction is 1-octadecanoyl-2-(5Z,8Z,11Z,14Z-eicosatetraenoyl)-sn-glycero-3-phospho-(1D-myo-inositol) + H2O = 1-octadecanoyl-sn-glycero-3-phospho-(1D-myo-inositol) + (5Z,8Z,11Z,14Z)-eicosatetraenoate + H(+). The enzyme catalyses 1-hexadecanoyl-2-(9Z-octadecenoyl)-sn-glycero-3-phosphoglycerol + H2O = 1-hexadecanoyl-sn-glycero-3-phosphoglycerol + (9Z)-octadecenoate + H(+). It catalyses the reaction N-hexadecanoyl-1,2-di-(9Z-octadecenoyl)-sn-glycero-3-phosphoethanolamine + H2O = N-hexadecanoyl-1-(9Z-octadecenoyl)-sn-glycero-3-phosphoethanolamine + (9Z)-octadecenoate + H(+). It carries out the reaction 1'-[1,2-di-(9Z-octadecenoyl)-sn-glycero-3-phospho]-3'-[1-(9Z-octadecenoyl)-sn-glycero-3-phospho]-glycerol + H2O = 1',3'-bis-[1-(9Z-octadecenoyl)-sn-glycero-3-phospho]-glycerol + (9Z)-octadecenoate + H(+). The catalysed reaction is 1',3'-bis[1,2-di-(9Z-octadecenoyl)-sn-glycero-3-phospho]-glycerol + H2O = 1'-[1,2-di-(9Z-octadecenoyl)-sn-glycero-3-phospho]-3'-[1-(9Z-octadecenoyl)-sn-glycero-3-phospho]-glycerol + (9Z)-octadecenoate + H(+). It functions in the pathway lipid metabolism; phospholipid metabolism. The protein operates within lipid metabolism; leukotriene B4 biosynthesis. It participates in lipid metabolism; leukotriene C4 biosynthesis. Its activity is regulated as follows. Activated by cardiolipin. Its function is as follows. Secretory calcium-dependent phospholipase A2 that primarily targets extracellular phospholipids. Hydrolyzes the ester bond of the fatty acyl group attached at sn-2 position of phospholipids (phospholipase A2 activity), preferentially releasing fatty acyl groups with a low degree of unsaturation such as oleoyl (C18:1) and linoleoyl (C18:2) groups. Hydrolyzes low-density lipoprotein (LDL) phospholipids releasing unsaturated fatty acids that drive macrophage polarization toward an M2 phenotype. May act in an autocrine and paracrine manner. Contributes to lipid remodeling of cellular membranes at different subcellular locations and generation of lipid mediators involved in pathogen clearance. Cleaves sn-2 fatty acyl chains of cardiolipin, a major component of the inner membrane of mitochondria and bacterial membranes. Promotes phagocytosis of bacteria in macrophages through production of lysophosphatidylethanolamines. Displays bactericidal activity against Gram-positive bacteria by directly hydrolyzing phospholipids of the bacterial membrane. Promotes phagocytosis and killing of ingested fungi likely through controlling phagosome-lysosome fusion and phagosome maturation. Plays a role in biosynthesis of cysteinyl leukotrienes (CysLTs) in myeloid cells. In eosinophils, triggers perinuclear arachidonate release and LTC4 synthesis in a PLA2G4A-independent way. In neutrophils, amplifies CysLTs biosynthesis initiated by PLA2G4A. Promotes immune complex clearance in macrophages via stimulating synthesis of CysLTs, which act through CYSLTR1 to trigger phagocytosis. May regulate antigen processing in antigen-presenting cells. In pulmonary macrophages regulates IL33 production required for activation of group 2 innate lymphoid cells. May play a role in the biosynthesis of N-acyl ethanolamines that regulate energy metabolism. Hydrolyzes N-acyl phosphatidylethanolamines to N-acyl lysophosphatidylethanolamines, which are further cleaved by a lysophospholipase D to release N-acyl ethanolamines. The sequence is that of Phospholipase A2 group V (PLA2G5) from Homo sapiens (Human).